A 332-amino-acid polypeptide reads, in one-letter code: 6-phosphogluconolactonase (332 aa).

The protein belongs to the cycloisomerase 2 family.

The catalysed reaction is 6-phospho-D-glucono-1,5-lactone + H2O = 6-phospho-D-gluconate + H(+). It participates in carbohydrate degradation; pentose phosphate pathway; D-ribulose 5-phosphate from D-glucose 6-phosphate (oxidative stage): step 2/3. In terms of biological role, catalyzes the hydrolysis of 6-phosphogluconolactone to 6-phosphogluconate. This chain is 6-phosphogluconolactonase, found in Pectobacterium atrosepticum (strain SCRI 1043 / ATCC BAA-672) (Erwinia carotovora subsp. atroseptica).